Consider the following 149-residue polypeptide: Calmodulin-5/6/7/8 (149 aa).

Position 2 is an N-acetylalanine (A2). 4 EF-hand domains span residues 8–43 (DQISEFKEAFSLFDKDGDGCITTKELGTVMRSLGQN), 44–79 (PTEAELQDMINEVDADGNGTIDFPEFLNLMARKMKD), 81–116 (DSEEELKEAFRVFDKDQNGFISAAELRHVMTNLGEK), and 117–149 (LTDEEVDEMIREADVDGDGQINYDEFVKVMMAK). Residues D21, D23, D25, C27, E32, D57, D59, N61, T63, E68, D94, D96, N98, and E105 each contribute to the Ca(2+) site. The residue at position 116 (K116) is an N6,N6,N6-trimethyllysine. 5 residues coordinate Ca(2+): D130, D132, D134, Q136, and E141.

This sequence belongs to the calmodulin family. High expression of PCM5 and 8 in stolon tips and stems, moderate in roots, and low in leaves. Steady-state expression of PCM6 in all the tissues tested, except in the leaves where the expression is lower.

Calmodulin mediates the control of a large number of enzymes, ion channels and other proteins by Ca(2+). Among the enzymes to be stimulated by the calmodulin-Ca(2+) complex are a number of protein kinases and phosphatases. The sequence is that of Calmodulin-5/6/7/8 (PCM5) from Solanum tuberosum (Potato).